Consider the following 880-residue polypeptide: Alanine--tRNA ligase (880 aa).

4 residues coordinate Zn(2+): histidine 566, histidine 570, cysteine 668, and histidine 672.

The protein belongs to the class-II aminoacyl-tRNA synthetase family. Zn(2+) serves as cofactor.

The protein resides in the cytoplasm. The enzyme catalyses tRNA(Ala) + L-alanine + ATP = L-alanyl-tRNA(Ala) + AMP + diphosphate. Catalyzes the attachment of alanine to tRNA(Ala) in a two-step reaction: alanine is first activated by ATP to form Ala-AMP and then transferred to the acceptor end of tRNA(Ala). Also edits incorrectly charged Ser-tRNA(Ala) and Gly-tRNA(Ala) via its editing domain. This is Alanine--tRNA ligase from Trichormus variabilis (strain ATCC 29413 / PCC 7937) (Anabaena variabilis).